The chain runs to 353 residues: Dihydroorotate dehydrogenase (quinone) (353 aa).

FMN-binding positions include 67–71 and threonine 91; that span reads AGFDK. Lysine 71 is a substrate binding site. 116-120 contacts substrate; sequence NRMGF. Residues asparagine 144 and asparagine 177 each contribute to the FMN site. Asparagine 177 is a substrate binding site. Catalysis depends on serine 180, which acts as the Nucleophile. A substrate-binding site is contributed by asparagine 182. Residues lysine 215 and threonine 243 each coordinate FMN. 244–245 serves as a coordination point for substrate; sequence NT. FMN is bound by residues glycine 264, glycine 293, and 314–315; that span reads YT.

This sequence belongs to the dihydroorotate dehydrogenase family. Type 2 subfamily. Monomer. Requires FMN as cofactor.

The protein localises to the cell membrane. The enzyme catalyses (S)-dihydroorotate + a quinone = orotate + a quinol. It participates in pyrimidine metabolism; UMP biosynthesis via de novo pathway; orotate from (S)-dihydroorotate (quinone route): step 1/1. Its function is as follows. Catalyzes the conversion of dihydroorotate to orotate with quinone as electron acceptor. This Gloeobacter violaceus (strain ATCC 29082 / PCC 7421) protein is Dihydroorotate dehydrogenase (quinone).